The chain runs to 297 residues: Homoserine kinase (297 aa).

82–92 serves as a coordination point for ATP; that stretch reads PLTRGLGSSAS.

The protein belongs to the GHMP kinase family. Homoserine kinase subfamily.

The protein resides in the cytoplasm. The catalysed reaction is L-homoserine + ATP = O-phospho-L-homoserine + ADP + H(+). It participates in amino-acid biosynthesis; L-threonine biosynthesis; L-threonine from L-aspartate: step 4/5. Its function is as follows. Catalyzes the ATP-dependent phosphorylation of L-homoserine to L-homoserine phosphate. This chain is Homoserine kinase, found in Bacillus cereus (strain AH187).